The primary structure comprises 151 residues: D-aminoacyl-tRNA deacylase (151 aa).

The Gly-cisPro motif, important for rejection of L-amino acids motif lies at 137–138; it reads GP.

This sequence belongs to the DTD family. In terms of assembly, homodimer.

The protein resides in the cytoplasm. The enzyme catalyses glycyl-tRNA(Ala) + H2O = tRNA(Ala) + glycine + H(+). It catalyses the reaction a D-aminoacyl-tRNA + H2O = a tRNA + a D-alpha-amino acid + H(+). Functionally, an aminoacyl-tRNA editing enzyme that deacylates mischarged D-aminoacyl-tRNAs. Also deacylates mischarged glycyl-tRNA(Ala), protecting cells against glycine mischarging by AlaRS. Acts via tRNA-based rather than protein-based catalysis; rejects L-amino acids rather than detecting D-amino acids in the active site. By recycling D-aminoacyl-tRNA to D-amino acids and free tRNA molecules, this enzyme counteracts the toxicity associated with the formation of D-aminoacyl-tRNA entities in vivo and helps enforce protein L-homochirality. The polypeptide is D-aminoacyl-tRNA deacylase (Solibacter usitatus (strain Ellin6076)).